The sequence spans 306 residues: UDP-3-O-acyl-N-acetylglucosamine deacetylase (306 aa).

Positions 79, 238, and 242 each coordinate Zn(2+). Catalysis depends on histidine 265, which acts as the Proton donor.

It belongs to the LpxC family. The cofactor is Zn(2+).

It catalyses the reaction a UDP-3-O-[(3R)-3-hydroxyacyl]-N-acetyl-alpha-D-glucosamine + H2O = a UDP-3-O-[(3R)-3-hydroxyacyl]-alpha-D-glucosamine + acetate. The protein operates within glycolipid biosynthesis; lipid IV(A) biosynthesis; lipid IV(A) from (3R)-3-hydroxytetradecanoyl-[acyl-carrier-protein] and UDP-N-acetyl-alpha-D-glucosamine: step 2/6. Catalyzes the hydrolysis of UDP-3-O-myristoyl-N-acetylglucosamine to form UDP-3-O-myristoylglucosamine and acetate, the committed step in lipid A biosynthesis. This chain is UDP-3-O-acyl-N-acetylglucosamine deacetylase, found in Yersinia pseudotuberculosis serotype O:1b (strain IP 31758).